Reading from the N-terminus, the 806-residue chain is Leucine--tRNA ligase (806 aa).

The 'HIGH' region motif lies at 38–48; it reads PYPSGEIHMGH. The 'KMSKS' region signature appears at 572-576; the sequence is KMSKS. Residue lysine 575 coordinates ATP.

This sequence belongs to the class-I aminoacyl-tRNA synthetase family.

Its subcellular location is the cytoplasm. The catalysed reaction is tRNA(Leu) + L-leucine + ATP = L-leucyl-tRNA(Leu) + AMP + diphosphate. This Helicobacter pylori (strain J99 / ATCC 700824) (Campylobacter pylori J99) protein is Leucine--tRNA ligase.